The sequence spans 347 residues: Protein phosphatase 1 regulatory subunit 3G (347 aa).

The disordered stretch occupies residues 1–77; the sequence is MDPSGEQLHR…ELQEYRRSRA (77 aa). Residues 13 to 22 show a composition bias toward polar residues; the sequence is ASSSTSSGDP. S81 is subject to Phosphoserine. Residues 200–339 form the CBM21 domain; it reads EERLRRQRVC…NNEGANYTLR (140 aa). Residues 258 to 286 form a disordered region; it reads DPESVEPLPPLQSGDSGSKAEDSEEGPGT.

Functionally, glycogen-targeting subunit for protein phosphatase 1 (PP1). Involved in the regulation of hepatic glycogenesis in a manner coupled to the fasting-feeding cycle and distinct from other glycogen-targeting subunits. This chain is Protein phosphatase 1 regulatory subunit 3G (Ppp1r3g), found in Mus musculus (Mouse).